The primary structure comprises 221 residues: Octanoyltransferase (221 aa).

Residues 29-208 form the BPL/LPL catalytic domain; sequence DEIPDTCLLL…RLTEFLLPAR (180 aa). Residues 67 to 74, 138 to 140, and 151 to 153 contribute to the substrate site; these read RGGRITWH, AIG, and GFA. The active-site Acyl-thioester intermediate is Cys169.

The protein belongs to the LipB family.

Its subcellular location is the cytoplasm. It catalyses the reaction octanoyl-[ACP] + L-lysyl-[protein] = N(6)-octanoyl-L-lysyl-[protein] + holo-[ACP] + H(+). Its pathway is protein modification; protein lipoylation via endogenous pathway; protein N(6)-(lipoyl)lysine from octanoyl-[acyl-carrier-protein]: step 1/2. In terms of biological role, catalyzes the transfer of endogenously produced octanoic acid from octanoyl-acyl-carrier-protein onto the lipoyl domains of lipoate-dependent enzymes. Lipoyl-ACP can also act as a substrate although octanoyl-ACP is likely to be the physiological substrate. The polypeptide is Octanoyltransferase (Acidothermus cellulolyticus (strain ATCC 43068 / DSM 8971 / 11B)).